Here is a 187-residue protein sequence, read N- to C-terminus: uncharacterized protein (187 aa).

Residues 1–95 are disordered; it reads MTTMKRSADP…GSTRPSARYG (95 aa). A compositionally biased stretch (basic residues) spans 46–80; that stretch reads RARRSRGPKRFLGKRNYRRARARKPGKRDRAHSSK.

It localises to the mitochondrion. This is an uncharacterized protein from Arabidopsis thaliana (Mouse-ear cress).